Here is a 161-residue protein sequence, read N- to C-terminus: MGIQQITNMCSHLQNASRARLGLTSLPNTKYNLALALALHRAGFISSITRGGPHPPTPEALMTYEPEPVTSANVATRRLWVGLKYWNEEPVLKELKPISKPSRLVTASLEQLNRVARGFPAGYMKGLQLGECLFVNTDRGVLEVREAVERKVGGLVLCKVK.

Belongs to the universal ribosomal protein uS8 family. Component of the mitochondrial small ribosomal subunit (mt-SSU). Mature N.crassa 74S mitochondrial ribosomes consist of a small (37S) and a large (54S) subunit. The 37S small subunit contains a 16S ribosomal RNA (16S mt-rRNA) and 32 different proteins. The 54S large subunit contains a 23S rRNA (23S mt-rRNA) and 42 different proteins.

Its subcellular location is the mitochondrion. Component of the mitochondrial ribosome (mitoribosome), a dedicated translation machinery responsible for the synthesis of mitochondrial genome-encoded proteins, including at least some of the essential transmembrane subunits of the mitochondrial respiratory chain. The mitoribosomes are attached to the mitochondrial inner membrane and translation products are cotranslationally integrated into the membrane. The chain is Small ribosomal subunit protein uS8m (mrps8) from Neurospora crassa (strain ATCC 24698 / 74-OR23-1A / CBS 708.71 / DSM 1257 / FGSC 987).